A 125-amino-acid polypeptide reads, in one-letter code: Small ribosomal subunit protein bS6 (125 aa).

This sequence belongs to the bacterial ribosomal protein bS6 family.

In terms of biological role, binds together with bS18 to 16S ribosomal RNA. In Campylobacter jejuni subsp. jejuni serotype O:2 (strain ATCC 700819 / NCTC 11168), this protein is Small ribosomal subunit protein bS6 (rpsF).